A 725-amino-acid polypeptide reads, in one-letter code: Ribosomal RNA large subunit methyltransferase K/L (725 aa).

A THUMP domain is found at 45–156 (SGYRACLWSR…RGRLSLGIDL (112 aa)).

Belongs to the methyltransferase superfamily. RlmKL family.

It localises to the cytoplasm. The catalysed reaction is guanosine(2445) in 23S rRNA + S-adenosyl-L-methionine = N(2)-methylguanosine(2445) in 23S rRNA + S-adenosyl-L-homocysteine + H(+). It carries out the reaction guanosine(2069) in 23S rRNA + S-adenosyl-L-methionine = N(2)-methylguanosine(2069) in 23S rRNA + S-adenosyl-L-homocysteine + H(+). Its function is as follows. Specifically methylates the guanine in position 2445 (m2G2445) and the guanine in position 2069 (m7G2069) of 23S rRNA. In Marinobacter nauticus (strain ATCC 700491 / DSM 11845 / VT8) (Marinobacter aquaeolei), this protein is Ribosomal RNA large subunit methyltransferase K/L.